Here is a 621-residue protein sequence, read N- to C-terminus: Probable potassium transport system protein Kup 2 (621 aa).

Helical transmembrane passes span 9 to 29 (MAGLTLAALGVVYGDIGTSPL), 48 to 68 (IFGILSLIFWSLIFVVSVKYV), 101 to 121 (IVLLGLFGAALFYGDAIITPA), 136 to 156 (SGMEAYVLPMAVGVLVGLFLL), 164 to 184 (VGLMFGPVMMVWFAILGILGL), 210 to 230 (GFHAFLTLGSVVLALTGAEAL), 246 to 266 (WFSLVLPGLGLNYFGQGALLM), 275 to 295 (PFFLLAPDWALLPMIALATLA), 336 to 356 (IYMPFINWALLVAVLVVVLTF), 364 to 384 (AAYGIAVTGTMLITTMLFFVV), 393 to 413 (LPLALGITLLFGVIDTAFFAA), and 418 to 438 (VADGGWLPLVMGMAIFTLMST).

The protein belongs to the HAK/KUP transporter (TC 2.A.72) family.

It is found in the cell inner membrane. The enzyme catalyses K(+)(in) + H(+)(in) = K(+)(out) + H(+)(out). Its function is as follows. Transport of potassium into the cell. Likely operates as a K(+):H(+) symporter. The sequence is that of Probable potassium transport system protein Kup 2 from Chromobacterium violaceum (strain ATCC 12472 / DSM 30191 / JCM 1249 / CCUG 213 / NBRC 12614 / NCIMB 9131 / NCTC 9757 / MK).